Consider the following 473-residue polypeptide: Glutamate--tRNA ligase (473 aa).

The 'HIGH' region motif lies at 11 to 21 (PSPTGFLHIGG). The short motif at 240–244 (KLSKR) is the 'KMSKS' region element. Lys-243 provides a ligand contact to ATP.

It belongs to the class-I aminoacyl-tRNA synthetase family. Glutamate--tRNA ligase type 1 subfamily. Monomer.

The protein resides in the cytoplasm. It carries out the reaction tRNA(Glu) + L-glutamate + ATP = L-glutamyl-tRNA(Glu) + AMP + diphosphate. Functionally, catalyzes the attachment of glutamate to tRNA(Glu) in a two-step reaction: glutamate is first activated by ATP to form Glu-AMP and then transferred to the acceptor end of tRNA(Glu). This is Glutamate--tRNA ligase from Afipia carboxidovorans (strain ATCC 49405 / DSM 1227 / KCTC 32145 / OM5) (Oligotropha carboxidovorans).